The following is a 338-amino-acid chain: Cytosolic sulfotransferase 16 (338 aa).

Residue 81 to 86 (KTGTTW) participates in 3'-phosphoadenylyl sulfate binding. The active-site Proton acceptor is histidine 143. Residues arginine 165, serine 173, tyrosine 231, and 301–303 (RKG) each bind 3'-phosphoadenylyl sulfate.

Belongs to the sulfotransferase 1 family. In terms of tissue distribution, highly expressed in roots, stems and mature leaves. Low expression in young leaves and flowers. Barely detected in siliques.

It localises to the cytoplasm. It carries out the reaction (Z)-desulfoglucotropeolin + 3'-phosphoadenylyl sulfate = (Z)-glucotropeolin + adenosine 3',5'-bisphosphate + H(+). The enzyme catalyses (Z)-indolylmethyl desulfoglucosinolate + 3'-phosphoadenylyl sulfate = (Z)-glucobrassicin + adenosine 3',5'-bisphosphate + H(+). With respect to regulation, inhibited by phosphoadenosine 5'-phosphate (PAP). Functionally, sulfotransferase that utilizes 3'-phospho-5'-adenylyl sulfate (PAPS) as sulfonate donor to catalyze the sulfate conjugation of desulfo-glucosinolates (dsGSs), the final step in the biosynthesis of the glucosinolate core structure. Substrate preference is desulfo-2-phenylethyl glucosinolate &gt; desulfo-indol-3-yl methyl glucosinolate &gt; desulfo-benzyl glucosinolate &gt; desulfo-6-methylthiohexyl glucosinolate &gt; desulfo-4-methylthiobutyl glucosinolate &gt; desulfo-3-methylthiopropyl glucosinolate &gt; desulfo-singrin &gt; desulfo-3-butenyl glucosinolate. The protein is Cytosolic sulfotransferase 16 (SOT16) of Arabidopsis thaliana (Mouse-ear cress).